A 128-amino-acid polypeptide reads, in one-letter code: Sulfurtransferase TusD (128 aa).

The active-site Cysteine persulfide intermediate is the C78.

It belongs to the DsrE/TusD family. In terms of assembly, heterohexamer, formed by a dimer of trimers. The hexameric TusBCD complex contains 2 copies each of TusB, TusC and TusD. The TusBCD complex interacts with TusE.

The protein resides in the cytoplasm. In terms of biological role, part of a sulfur-relay system required for 2-thiolation of 5-methylaminomethyl-2-thiouridine (mnm(5)s(2)U) at tRNA wobble positions. Accepts sulfur from TusA and transfers it in turn to TusE. This is Sulfurtransferase TusD from Shigella flexneri serotype 5b (strain 8401).